The following is a 226-amino-acid chain: MLHFGGFIMEINHISKILEKEREEYIRNKVEEYLKQGFSKDDAVNKANQSWRTYIGHRIQDVIYNLLKKFLKDSGLKVTTDKALNNRNLPEELDKVKRLIAINYGEYLFLPDADVIVYKVENNDIKIIAIISVKNSFRERRFETTYWKLKLKESPVTSHIKVFLATPDKDNEISYKCPNGKPKKMRIILEYELDGIYFLKEDFEETEKAKHFGKIVEDIIEISKKL.

This sequence belongs to the BsaWI type II restriction endonuclease family.

The enzyme catalyses Endonucleolytic cleavage of DNA to give specific double-stranded fragments with terminal 5'-phosphates.. Its function is as follows. A P subtype restriction enzyme that recognizes the double-stranded sequence 5'-CCGG-3'; the cleavage site is unknown. The polypeptide is Putative type II restriction enzyme MjaVIP (mjaVIRP) (Methanocaldococcus jannaschii (strain ATCC 43067 / DSM 2661 / JAL-1 / JCM 10045 / NBRC 100440) (Methanococcus jannaschii)).